A 484-amino-acid chain; its full sequence is Actin-related protein 8 (484 aa).

Positions 44-90 (LGALDVLPIDVLAQILRLLGPADAARSTAVCRAWRLLASDNGLWAFF) constitute an F-box domain. 262 to 265 (NIGF) is an ATP binding site.

Belongs to the actin family. Plant ARP8 subfamily.

Its subcellular location is the nucleus. The protein localises to the nucleolus. It localises to the cytoplasm. The protein is Actin-related protein 8 (ARP8) of Oryza sativa subsp. indica (Rice).